A 737-amino-acid polypeptide reads, in one-letter code: Autolysin (737 aa).

Residues Met-1–Lys-13 are compositionally biased toward basic and acidic residues. 3 disordered regions span residues Met-1–Thr-28, Ala-51–Ser-132, and Pro-335–Asn-360. An N-terminal signal peptide occupies residues Met-1–Ala-53. Residues Pro-67–Thr-117 are compositionally biased toward low complexity. Residues Ala-118–Ser-132 show a composition bias toward polar residues. The span at Gly-339–Gly-352 shows a compositional bias: gly residues. Residues Thr-361 to Val-404 enclose the LysM 1 domain. The interval Ser-409–Thr-429 is disordered. Residues Gly-410–Gly-419 show a composition bias toward gly residues. Over residues Ser-420–Thr-429 the composition is skewed to low complexity. 5 consecutive LysM domains span residues Thr-429–Val-472, Thr-497–Val-540, Thr-565–Val-608, Thr-631–Val-674, and Lys-693–Val-736.

It belongs to the glycosyl hydrolase 73 family.

It is found in the secreted. Its function is as follows. Hydrolyzes the cell wall of E.faecalis and M.lysodeikticus. May play an important role in cell wall growth and cell separation. The polypeptide is Autolysin (Enterococcus faecalis (strain ATCC 700802 / V583)).